The primary structure comprises 472 residues: Coronin-6 (472 aa).

WD repeat units follow at residues 23-64, 72-111, 122-161, 165-204, 210-251, and 256-296; these read QAYE…VLPL, KNYP…VWQI, EPII…IWNV, EVLL…IIDP, VAEQ…LWDP, and EPVA…YFEI. The tract at residues 407-433 is disordered; it reads KRNILDVRPPSGPRRSQSASDAPLSQQ. Residues 420 to 433 show a composition bias toward polar residues; sequence RRSQSASDAPLSQQ. The stretch at 430–464 forms a coiled coil; sequence LSQQHTLETLLEEIKALRERVQAQEQRITALENML.

The chain is Coronin-6 (CORO6) from Homo sapiens (Human).